Here is a 212-residue protein sequence, read N- to C-terminus: Superoxide dismutase [Fe] 1, chloroplastic (212 aa).

The residue at position 2 (A2) is an N-acetylalanine. H35, H87, D169, and H173 together coordinate Fe cation.

Belongs to the iron/manganese superoxide dismutase family. Homodimer. Interacts with cpn20/cpn21. It depends on Fe cation as a cofactor.

The protein localises to the cell membrane. The protein resides in the plastid. It is found in the chloroplast membrane. Its subcellular location is the chloroplast stroma. It carries out the reaction 2 superoxide + 2 H(+) = H2O2 + O2. With respect to regulation, activated by cpn20/cpn21. Destroys superoxide anion radicals which are normally produced within the cells and which are toxic to biological systems. This Arabidopsis thaliana (Mouse-ear cress) protein is Superoxide dismutase [Fe] 1, chloroplastic (FSD1).